The primary structure comprises 238 residues: Endothelial protein C receptor (238 aa).

An N-terminal signal peptide occupies residues 1-17 (MLTTLLPILLLSGWAFC). Over 18–210 (SQDASDGLQR…GSQTSRSYTS (193 aa)) the chain is Extracellular. N-linked (GlcNAc...) asparagine glycans are attached at residues asparagine 47, asparagine 64, asparagine 136, and asparagine 172. A disulfide bridge connects residues cysteine 118 and cysteine 186. The chain crosses the membrane as a helical span at residues 211–231 (LVLGVLVGSFIIAGVAVGIFL). The Cytoplasmic portion of the chain corresponds to 232–238 (CTGGRRC).

N-glycosylated. Post-translationally, a soluble form exists; probably released by a metalloprotease. Seems to have the same activity as the membrane-bound form. As to expression, expressed strongly in the endothelial cells of arteries and veins in heart and lung, less intensely in capillaries in the lung and skin, and not at all in the endothelium of small vessels of the liver and kidney.

It is found in the membrane. Binds activated protein C. Enhances protein C activation by the thrombin-thrombomodulin complex; plays a role in the protein C pathway controlling blood coagulation. This is Endothelial protein C receptor (PROCR) from Homo sapiens (Human).